We begin with the raw amino-acid sequence, 184 residues long: ATP synthase subunit delta (184 aa).

It belongs to the ATPase delta chain family. In terms of assembly, F-type ATPases have 2 components, F(1) - the catalytic core - and F(0) - the membrane proton channel. F(1) has five subunits: alpha(3), beta(3), gamma(1), delta(1), epsilon(1). F(0) has three main subunits: a(1), b(2) and c(10-14). The alpha and beta chains form an alternating ring which encloses part of the gamma chain. F(1) is attached to F(0) by a central stalk formed by the gamma and epsilon chains, while a peripheral stalk is formed by the delta and b chains.

Its subcellular location is the cell inner membrane. In terms of biological role, f(1)F(0) ATP synthase produces ATP from ADP in the presence of a proton or sodium gradient. F-type ATPases consist of two structural domains, F(1) containing the extramembraneous catalytic core and F(0) containing the membrane proton channel, linked together by a central stalk and a peripheral stalk. During catalysis, ATP synthesis in the catalytic domain of F(1) is coupled via a rotary mechanism of the central stalk subunits to proton translocation. Its function is as follows. This protein is part of the stalk that links CF(0) to CF(1). It either transmits conformational changes from CF(0) to CF(1) or is implicated in proton conduction. The protein is ATP synthase subunit delta of Rhizorhabdus wittichii (strain DSM 6014 / CCUG 31198 / JCM 15750 / NBRC 105917 / EY 4224 / RW1) (Sphingomonas wittichii).